We begin with the raw amino-acid sequence, 303 residues long: Ribosomal RNA small subunit methyltransferase H (303 aa).

Residues 33 to 35 (GGH), Asp-52, Phe-79, Asp-97, and Gln-104 contribute to the S-adenosyl-L-methionine site.

This sequence belongs to the methyltransferase superfamily. RsmH family.

The protein localises to the cytoplasm. The catalysed reaction is cytidine(1402) in 16S rRNA + S-adenosyl-L-methionine = N(4)-methylcytidine(1402) in 16S rRNA + S-adenosyl-L-homocysteine + H(+). In terms of biological role, specifically methylates the N4 position of cytidine in position 1402 (C1402) of 16S rRNA. The chain is Ribosomal RNA small subunit methyltransferase H from Wolinella succinogenes (strain ATCC 29543 / DSM 1740 / CCUG 13145 / JCM 31913 / LMG 7466 / NCTC 11488 / FDC 602W) (Vibrio succinogenes).